Consider the following 394-residue polypeptide: Ribulose bisphosphate carboxylase large chain (394 aa).

K5 is subject to N6,N6,N6-trimethyllysine. Substrate is bound by residues N114 and T164. K166 functions as the Proton acceptor in the catalytic mechanism. Residue K168 participates in substrate binding. K192, D194, and E195 together coordinate Mg(2+). An N6-carboxylysine modification is found at K192. H285 functions as the Proton acceptor in the catalytic mechanism. Positions 286, 318, and 370 each coordinate substrate.

Belongs to the RuBisCO large chain family. Type I subfamily. Heterohexadecamer of 8 large chains and 8 small chains. Mg(2+) serves as cofactor.

It localises to the plastid. The protein resides in the chloroplast. The enzyme catalyses 2 (2R)-3-phosphoglycerate + 2 H(+) = D-ribulose 1,5-bisphosphate + CO2 + H2O. The catalysed reaction is D-ribulose 1,5-bisphosphate + O2 = 2-phosphoglycolate + (2R)-3-phosphoglycerate + 2 H(+). Its function is as follows. RuBisCO catalyzes two reactions: the carboxylation of D-ribulose 1,5-bisphosphate, the primary event in carbon dioxide fixation, as well as the oxidative fragmentation of the pentose substrate in the photorespiration process. Both reactions occur simultaneously and in competition at the same active site. This is Ribulose bisphosphate carboxylase large chain (rbcL) from Euryale ferox (Gorgon plant).